Reading from the N-terminus, the 438-residue chain is Nucleolar protein 12 (438 aa).

2 disordered regions span residues 1–28 (MGET…VDPT) and 60–94 (ANGV…LNDS). The segment covering 60–71 (ANGVEEAAETIE) has biased composition (acidic residues). A phosphoserine mark is found at Ser94 and Ser95. A disordered region spans residues 108–146 (AEEDEEKDKDSAGLINDEEDKSPAKQSVLEERTSQEDVK). Residues 135-146 (VLEERTSQEDVK) are compositionally biased toward basic and acidic residues. 2 consecutive RRM domains span residues 164–262 (KTVF…SVSH) and 270–348 (RCVF…RAKS). Basic residues-rich tracts occupy residues 346 to 357 (AKSTKPKSITRS) and 402 to 412 (AKKKVNKKRKE). Disordered stretches follow at residues 346 to 366 (AKST…KTRT) and 390 to 438 (EGHR…KKDK).

This sequence belongs to the RRM RBM34 family.

Its subcellular location is the nucleus. It is found in the nucleolus. Its function is as follows. Involved in pre-25S rRNA processing. This chain is Nucleolar protein 12 (nop12), found in Schizosaccharomyces pombe (strain 972 / ATCC 24843) (Fission yeast).